We begin with the raw amino-acid sequence, 1939 residues long: MSSDAEMAVFGEAAPYLRKSEKERIEAQNKPFDAKSSVFVVDAKESYVKATVQSREGGKVTAKTEGGATVTVKEDQVFSMNPPKYDKIEDMAMMTHLHEPAVLYNLKERYAAWMIYTYSGLFCVTVNPYKWLPVYNPEVVAAYRGKKRQEAPPHIFSISDNAYQFMLTDRENQSILITGESGAGKTVNTKRVIQYFATIAVTGDKKKEEAPSGKMQGTLEDQIISANPLLEAFGNAKTVRNDNSSRFGKFIRIHFGATGKLASADIETYLLEKSRVTFQLKAERSYHIFYQVMSNKKPELIEMLLITTNPYDFAYVSQGEITVPSIDDQEELMATDTAVDILGFTADEKVAIYKLTGAVMHYGNMKFKQKQREEQAEPDGTEVADKAAYLTSLNSADLLKALCYPRVKVGNEYVTKGQTVQQVYNSVGALAKAMYEKMFLWMVTRINQQLDTKQPRQYFIGVLDIAGFEIFDFNTLEQLCINFTNEKLQQFFNHHMFVLEQEEYKKEGIEWEFIDFGMDLAACIELIEKPMGIFSILEEECMFPKATDTSFKNKLYEQHLGKSNNFQKPKPAKGKAEAHFSLVHYAGTVDYNIIGWLDKNKDPLNETVVGLYQKSGLKTLAFLFSGGQAAEAEGGGGKKGGKKKGSSFQTVSALFRENLNKLMTNLKSTHPHFVRCLIPNETKTPGAMEHELVLHQLRCNGVLEGIRICRKGFPSRILYADFKQRYKVLNASAIPEGQFIDSKKASEKLLGSIDIDHTQYKFGHTKVFFKAGLLGTLEEMRDEKLAQLITRTQAVCRGYLMRVEFRKMMERRESIFCIQYNVRAFMNVKHWPWMKLYFKIKPLLKSAETEKEMATMKEDFEKAKEDLAKSEAKRKELEEKMVALMQEKNDLQLQVQAEADGLADAEERCDQLIKTKIQLEAKIKELTERAEDEEEINAELTAKKRKLEDECSELKKDIDDLELTLAKVEKEKHATENKVKNLTEEMAGLDENIVKLTKEKKALQEAHQQTLDDLQAEEDKVNTLTKAKTKLEQQVDDLEGSLEQEKKLRMDLERAKRKLEGDLKLAQESTMDIENDKQQLDEKLKKKEFEMSNLQSKIEDEQALGMQLQKKIKELQARIEELEEEIEAERASRAKAEKQRSDLSRELEEISERLEEAGGATSAQIEMNKKREAEFQKMRRDLEEATLQHEATAAALRKKHADSVAELGEQIDNLQRVKQKLEKEKSELKMEIDDLASNMETVSKAKGNLEKMCRTLEDQLSEVKTKEEEQQRLINELSAQKARLHTESGEFSRQLDEKDAMVSQLSRGKQAFTQQIEELKRQLEEESKAKNALAHALQSARHDCDLLREQYEEEQEAKAELQRAMSKANSEVAQWRTKYETDAIQRTEELEEAKKKLAQRLQDAEEHVEAVNSKCASLEKTKQRLQNEVEDLMIDVERSNAACAALDKKQRNFDKVLAEWKQKYEETQAELEASQKESRSLSTELFKVKNAYEESLDQLETLKRENKNLQQEISDLTEQIAEGGKHIHELEKIKKQIDQEKSELQASLEEAEASLEHEEGKILRIQLELNQVKSEIDRKIAEKDEEIDQLKRNHLRVVESMQSTLDAEIRSRNDALRIKKKMEGDLNEMEIQLNHANRQAAEAIRNLRNTQGMLKDTQLHLDDALRGQDDLKEQLAMVERRANLMQAEIEELRASLEQTERSRRVAEQELLDASERVQLLHTQNTSLINTKKKLETDISQIQGEMEDIVQEARNAEEKAKKAITDAAMMAEELKKEQDTSAHLERMKKNMEQTVKDLQHRLDEAEQLALKGGKKQIQKLEARVRELENEVENEQKRNIEAVKGLRKHERRVKELTYQTEEDRKNVLRLQDLVDKLQTKVKAYKRQAEEAEEQSNVNLAKFRKIQHELEEAEERADIAESQVNKLRVKSREVHTKVISEE.

Residues 33–82 (DAKSSVFVVDAKESYVKATVQSREGGKVTAKTEGGATVTVKEDQVFSMNP) enclose the Myosin N-terminal SH3-like domain. At serine 36 the chain carries Phosphoserine. Phosphothreonine occurs at positions 64 and 69. Serine 79 carries the phosphoserine modification. In terms of domain architecture, Myosin motor spans 86–782 (DKIEDMAMMT…LLGTLEEMRD (697 aa)). Lysine 130 is modified (N6,N6,N6-trimethyllysine). 179–186 (GESGAGKT) is an ATP binding site. Tyrosine 389 bears the Phosphotyrosine mark. Threonine 391 is subject to Phosphothreonine. Serine 392 carries the post-translational modification Phosphoserine. Threonine 419 carries the phosphothreonine modification. Residue tyrosine 424 is modified to Phosphotyrosine. The residue at position 625 (serine 625) is a Phosphoserine. The tract at residues 659–681 (LNKLMTNLKSTHPHFVRCLIPNE) is actin-binding. Histidine 757 is modified (pros-methylhistidine). The segment at 761-775 (KFGHTKVFFKAGLLG) is actin-binding. Threonine 776 is modified (phosphothreonine). Residues 785 to 814 (LAQLITRTQAVCRGYLMRVEFRKMMERRES) form the IQ domain. Residues 843–1939 (LLKSAETEKE…EVHTKVISEE (1097 aa)) are a coiled coil. Phosphoserine occurs at positions 1092 and 1096. Disordered stretches follow at residues 1128–1147 (AERA…SREL) and 1153–1172 (RLEE…KKRE). A phosphoserine mark is found at serine 1162 and serine 1237. Threonine 1241 is modified (phosphothreonine). Serine 1243 carries the phosphoserine modification. Threonine 1255 is modified (phosphothreonine). Serine 1261 carries the post-translational modification Phosphoserine. Threonine 1265 is subject to Phosphothreonine. At serine 1278 the chain carries Phosphoserine. Threonine 1286 bears the Phosphothreonine mark. Serine 1288, serine 1292, serine 1303, serine 1306, and serine 1413 each carry phosphoserine. Tyrosine 1464 is modified (phosphotyrosine). Threonine 1467 carries the post-translational modification Phosphothreonine. A Phosphoserine modification is found at serine 1474. Tyrosine 1492 bears the Phosphotyrosine mark. Serine 1495 carries the phosphoserine modification. Threonine 1501 is subject to Phosphothreonine. At serine 1514 the chain carries Phosphoserine. Phosphothreonine is present on threonine 1517. Phosphoserine occurs at positions 1542, 1547, 1554, 1574, 1600, 1603, 1714, and 1726. Threonine 1730 and threonine 1736 each carry phosphothreonine. Serine 1739 is modified (phosphoserine).

The protein belongs to the TRAFAC class myosin-kinesin ATPase superfamily. Myosin family. Muscle myosin is a hexameric protein that consists of 2 heavy chain subunits (MHC), 2 alkali light chain subunits (MLC) and 2 regulatory light chain subunits (MLC-2).

The protein localises to the cytoplasm. It localises to the myofibril. Muscle contraction. The chain is Myosin-4 from Rattus norvegicus (Rat).